Reading from the N-terminus, the 316-residue chain is Transaldolase (316 aa).

Residue lysine 125 is the Schiff-base intermediate with substrate of the active site.

This sequence belongs to the transaldolase family. Type 1 subfamily. As to quaternary structure, homodimer.

It localises to the cytoplasm. The catalysed reaction is D-sedoheptulose 7-phosphate + D-glyceraldehyde 3-phosphate = D-erythrose 4-phosphate + beta-D-fructose 6-phosphate. It participates in carbohydrate degradation; pentose phosphate pathway; D-glyceraldehyde 3-phosphate and beta-D-fructose 6-phosphate from D-ribose 5-phosphate and D-xylulose 5-phosphate (non-oxidative stage): step 2/3. Transaldolase is important for the balance of metabolites in the pentose-phosphate pathway. This Acidovorax sp. (strain JS42) protein is Transaldolase.